The chain runs to 185 residues: Ubiquitin-conjugating enzyme E2 5 (185 aa).

In terms of domain architecture, UBC core spans Met1–Lys148. The Glycyl thioester intermediate role is filled by Cys85. Residues Tyr146–Pro185 form a disordered region. The segment covering Glu154–Val177 has biased composition (acidic residues).

The protein belongs to the ubiquitin-conjugating enzyme family. Expressed in developing ovules, but not in vascular tissues.

The enzyme catalyses S-ubiquitinyl-[E1 ubiquitin-activating enzyme]-L-cysteine + [E2 ubiquitin-conjugating enzyme]-L-cysteine = [E1 ubiquitin-activating enzyme]-L-cysteine + S-ubiquitinyl-[E2 ubiquitin-conjugating enzyme]-L-cysteine.. It functions in the pathway protein modification; protein ubiquitination. Accepts the ubiquitin from the E1 complex and catalyzes its covalent attachment to other proteins. The chain is Ubiquitin-conjugating enzyme E2 5 (UBC5) from Arabidopsis thaliana (Mouse-ear cress).